We begin with the raw amino-acid sequence, 263 residues long: HTH-type transcriptional repressor NanR (263 aa).

A disordered region spans residues 1-21 (MGLMNAFDSQTEDSSPVIGRN). The 69-residue stretch at 30–98 (KKLSEMVEEE…NGERARVSRP (69 aa)) folds into the HTH gntR-type domain. Positions 58 to 77 (ERELMAFFNVGRPSVREALA) form a DNA-binding region, H-T-H motif.

This sequence belongs to the NanR family.

Transcriptional repressor that controls expression of the genes required for the catabolism of sialic acids. In Escherichia coli O7:K1 (strain IAI39 / ExPEC), this protein is HTH-type transcriptional repressor NanR.